We begin with the raw amino-acid sequence, 402 residues long: Type II NADH:quinone oxidoreductase (402 aa).

FAD is bound by residues 12-16 (GAGYA), 39-40 (NK), and Val83. Glu172 is an active-site residue. FAD contacts are provided by residues Asp302, 319 to 320 (AQ), and Lys379.

This sequence belongs to the NADH dehydrogenase family. FAD serves as cofactor.

It localises to the cell membrane. The catalysed reaction is a quinone + NADH + H(+) = a quinol + NAD(+). Its function is as follows. Alternative, nonproton pumping NADH:quinone oxidoreductase that delivers electrons to the respiratory chain by oxidation of NADH and reduction of quinones, and contributes to the regeneration of NAD(+). The protein is Type II NADH:quinone oxidoreductase of Staphylococcus aureus (strain bovine RF122 / ET3-1).